The following is a 40-amino-acid chain: Metallothionein-1 (40 aa).

The protein belongs to the metallothionein superfamily. Type 5 family.

In terms of biological role, this protein binds cations of several transition elements. It is thought to be involved in detoxification processes. This Drosophila melanogaster (Fruit fly) protein is Metallothionein-1 (MtnA).